A 513-amino-acid chain; its full sequence is Maturase K (513 aa).

Belongs to the intron maturase 2 family. MatK subfamily.

It localises to the plastid. It is found in the chloroplast. Its function is as follows. Usually encoded in the trnK tRNA gene intron. Probably assists in splicing its own and other chloroplast group II introns. In Arundo donax (Giant reed), this protein is Maturase K.